A 660-amino-acid chain; its full sequence is Acyl-coenzyme A oxidase acox-1.3 (660 aa).

FAD-binding positions include 146 to 149, 154 to 155, and Gly-188; these read YAQT and GT. Substrate is bound by residues 282-285 and Arg-292; that span reads KIGY. Residues Arg-317 and 337 to 340 contribute to the FAD site; that span reads QQHR. ATP-binding residues include His-339, Ser-389, His-393, and Gln-401. A substrate-binding site is contributed by 430 to 431; the sequence is YE. Glu-431 functions as the Proton acceptor in the catalytic mechanism. Residue Glu-433 coordinates FAD. ATP is bound by residues 524–527 and Tyr-572; that span reads RASR. The Microbody targeting signal signature appears at 658-660; sequence AKL.

The protein belongs to the acyl-CoA oxidase family. As to quaternary structure, forms a heterodimer with acox-1.1; the interaction may be important for the stability of acox-1.3. Requires FAD as cofactor.

The protein localises to the peroxisome. It carries out the reaction asc-C7-CoA + O2 = asc-DeltaC7-CoA + H2O2. It participates in lipid metabolism; peroxisomal fatty acid beta-oxidation. With respect to regulation, activated by ATP. ATP binding leads to a conformational change that promotes FAD cofactor binding and enzyme activity. ATP binding likely occurs during acox-1.3 folding and/or dimer formation. Functionally, involved in the first step of peroxisomal beta-oxidation by catalyzing the desaturation of fatty acid-derived side chains of ascaroside pheromones, which regulates development and behavior. Specifically, shortens ascarosides with a 7-carbon side chain (asc-C7). Does not catalyze the desaturation of fatty acids or hydroxylated fatty acids. Involved in the biosynthesis of asc-C6-MK (daumone 2) and asc-delta-C9 (daumone 3) but not asc-C7 (daumone 1); daumones are pheromones produced during unfavourable growth conditions which promote entry into the dauer stage. The chain is Acyl-coenzyme A oxidase acox-1.3 from Caenorhabditis elegans.